The primary structure comprises 80 residues: Cytochrome c oxidase subunit 7B, mitochondrial (80 aa).

The N-terminal 24 residues, 1–24, are a transit peptide targeting the mitochondrion; sequence MFPLVKSALNRLQVRSIQQTMARQ. Topologically, residues 25 to 32 are mitochondrial matrix; that stretch reads SHQKRTPD. Residues 33–59 traverse the membrane as a helical segment; it reads FHDKYGNAVLASGATFCIVTWTYVATQ. The Mitochondrial intermembrane segment spans residues 60–80; sequence VGIEWNLSPVGRVTPKEWRNQ.

It belongs to the cytochrome c oxidase VIIb family. Component of the cytochrome c oxidase (complex IV, CIV), a multisubunit enzyme composed of 14 subunits. The complex is composed of a catalytic core of 3 subunits MT-CO1, MT-CO2 and MT-CO3, encoded in the mitochondrial DNA, and 11 supernumerary subunits COX4I1 (or COX4I2), COX5A, COX5B, COX6A1 (or COX6A2), COX6B1 (or COX6B2), COX6C, COX7A2 (or COX7A1), COX7B, COX7C, COX8A and NDUFA4, which are encoded in the nuclear genome. The complex exists as a monomer or a dimer and forms supercomplexes (SCs) in the inner mitochondrial membrane with NADH-ubiquinone oxidoreductase (complex I, CI) and ubiquinol-cytochrome c oxidoreductase (cytochrome b-c1 complex, complex III, CIII), resulting in different assemblies (supercomplex SCI(1)III(2)IV(1) and megacomplex MCI(2)III(2)IV(2)).

The protein localises to the mitochondrion inner membrane. Its pathway is energy metabolism; oxidative phosphorylation. In terms of biological role, component of the cytochrome c oxidase, the last enzyme in the mitochondrial electron transport chain which drives oxidative phosphorylation. The respiratory chain contains 3 multisubunit complexes succinate dehydrogenase (complex II, CII), ubiquinol-cytochrome c oxidoreductase (cytochrome b-c1 complex, complex III, CIII) and cytochrome c oxidase (complex IV, CIV), that cooperate to transfer electrons derived from NADH and succinate to molecular oxygen, creating an electrochemical gradient over the inner membrane that drives transmembrane transport and the ATP synthase. Cytochrome c oxidase is the component of the respiratory chain that catalyzes the reduction of oxygen to water. Electrons originating from reduced cytochrome c in the intermembrane space (IMS) are transferred via the dinuclear copper A center (CU(A)) of subunit 2 and heme A of subunit 1 to the active site in subunit 1, a binuclear center (BNC) formed by heme A3 and copper B (CU(B)). The BNC reduces molecular oxygen to 2 water molecules using 4 electrons from cytochrome c in the IMS and 4 protons from the mitochondrial matrix. Plays a role in proper central nervous system (CNS) development in vertebrates. The sequence is that of Cytochrome c oxidase subunit 7B, mitochondrial (COX7B) from Homo sapiens (Human).